Reading from the N-terminus, the 150-residue chain is UPF0178 protein Sbal195_1808 (150 aa).

This sequence belongs to the UPF0178 family.

This chain is UPF0178 protein Sbal195_1808, found in Shewanella baltica (strain OS195).